Reading from the N-terminus, the 73-residue chain is uncharacterized protein (73 aa).

The next 2 helical transmembrane spans lie at 10–30 (ILLA…YVSA) and 42–62 (YSTV…IYLI).

Its subcellular location is the cell membrane. This is an uncharacterized protein from Archaeoglobus fulgidus (strain ATCC 49558 / DSM 4304 / JCM 9628 / NBRC 100126 / VC-16).